Reading from the N-terminus, the 291-residue chain is N-acetylmannosamine kinase (291 aa).

ATP-binding positions include 5–12 and 132–139; these read AIDIGGTK and GVGGGVVS. The Zn(2+) site is built by histidine 156, cysteine 166, cysteine 168, and cysteine 173.

Belongs to the ROK (NagC/XylR) family. NanK subfamily. Homodimer.

The enzyme catalyses an N-acyl-D-mannosamine + ATP = an N-acyl-D-mannosamine 6-phosphate + ADP + H(+). The protein operates within amino-sugar metabolism; N-acetylneuraminate degradation; D-fructose 6-phosphate from N-acetylneuraminate: step 2/5. Catalyzes the phosphorylation of N-acetylmannosamine (ManNAc) to ManNAc-6-P. This chain is N-acetylmannosamine kinase, found in Escherichia coli (strain K12 / MC4100 / BW2952).